The following is a 44-amino-acid chain: Large ribosomal subunit protein bL36 (44 aa).

The protein belongs to the bacterial ribosomal protein bL36 family.

This chain is Large ribosomal subunit protein bL36, found in Pseudoalteromonas translucida (strain TAC 125).